A 511-amino-acid polypeptide reads, in one-letter code: Apolipoprotein N-acyltransferase (511 aa).

6 helical membrane-spanning segments follow: residues 7–29 (PGWP…LAPF), 58–78 (GWWY…VSIH), 90–110 (LLML…AWLW), 125–145 (LAFA…LTGF), 163–183 (VPVG…ALLV), and 192–212 (GASL…GLYL). The 241-residue stretch at 230–470 (IQGNIAQELK…QGILRGEVIP (241 aa)) folds into the CN hydrolase domain. Residue glutamate 269 is the Proton acceptor of the active site. The active site involves lysine 330. The Nucleophile role is filled by cysteine 382. The chain crosses the membrane as a helical span at residues 482–502 (VWPLAGLAGVLLLWALLGRQL).

This sequence belongs to the CN hydrolase family. Apolipoprotein N-acyltransferase subfamily.

It is found in the cell inner membrane. It carries out the reaction N-terminal S-1,2-diacyl-sn-glyceryl-L-cysteinyl-[lipoprotein] + a glycerophospholipid = N-acyl-S-1,2-diacyl-sn-glyceryl-L-cysteinyl-[lipoprotein] + a 2-acyl-sn-glycero-3-phospholipid + H(+). It functions in the pathway protein modification; lipoprotein biosynthesis (N-acyl transfer). Functionally, catalyzes the phospholipid dependent N-acylation of the N-terminal cysteine of apolipoprotein, the last step in lipoprotein maturation. This chain is Apolipoprotein N-acyltransferase, found in Pseudomonas aeruginosa (strain LESB58).